The chain runs to 284 residues: D-tagatose-1,6-bisphosphate aldolase subunit GatY (284 aa).

Catalysis depends on Asp-82, which acts as the Proton donor. The Zn(2+) site is built by His-83 and His-180. Gly-181 serves as a coordination point for dihydroxyacetone phosphate. His-208 is a Zn(2+) binding site. Dihydroxyacetone phosphate contacts are provided by residues 209–211 (GAS) and 230–233 (NVAT).

Belongs to the class II fructose-bisphosphate aldolase family. TagBP aldolase GatY subfamily. Forms a complex with GatZ. The cofactor is Zn(2+).

It carries out the reaction D-tagatofuranose 1,6-bisphosphate = D-glyceraldehyde 3-phosphate + dihydroxyacetone phosphate. The protein operates within carbohydrate metabolism; D-tagatose 6-phosphate degradation; D-glyceraldehyde 3-phosphate and glycerone phosphate from D-tagatose 6-phosphate: step 2/2. Functionally, catalytic subunit of the tagatose-1,6-bisphosphate aldolase GatYZ, which catalyzes the reversible aldol condensation of dihydroxyacetone phosphate (DHAP or glycerone-phosphate) with glyceraldehyde 3-phosphate (G3P) to produce tagatose 1,6-bisphosphate (TBP). Requires GatZ subunit for full activity and stability. Is involved in the catabolism of galactitol. This Escherichia coli O6:K15:H31 (strain 536 / UPEC) protein is D-tagatose-1,6-bisphosphate aldolase subunit GatY.